Here is a 113-residue protein sequence, read N- to C-terminus: Nitrogenase-stabilizing/protective protein NifW (113 aa).

This sequence belongs to the NifW family. As to quaternary structure, homotrimer; associates with NifD.

In terms of biological role, may protect the nitrogenase Fe-Mo protein from oxidative damage. The polypeptide is Nitrogenase-stabilizing/protective protein NifW (Polaromonas naphthalenivorans (strain CJ2)).